Here is a 159-residue protein sequence, read N- to C-terminus: 6,7-dimethyl-8-ribityllumazine synthase (159 aa).

Residues Trp-26, Ala-58–Glu-60, and Val-80–Ile-82 each bind 5-amino-6-(D-ribitylamino)uracil. Glu-85–Thr-86 serves as a coordination point for (2S)-2-hydroxy-3-oxobutyl phosphate. His-88 (proton donor) is an active-site residue. 5-amino-6-(D-ribitylamino)uracil is bound at residue Asn-113. Arg-127 lines the (2S)-2-hydroxy-3-oxobutyl phosphate pocket.

This sequence belongs to the DMRL synthase family. Homopentamer.

The enzyme catalyses (2S)-2-hydroxy-3-oxobutyl phosphate + 5-amino-6-(D-ribitylamino)uracil = 6,7-dimethyl-8-(1-D-ribityl)lumazine + phosphate + 2 H2O + H(+). Its pathway is cofactor biosynthesis; riboflavin biosynthesis; riboflavin from 2-hydroxy-3-oxobutyl phosphate and 5-amino-6-(D-ribitylamino)uracil: step 1/2. Functionally, catalyzes the formation of 6,7-dimethyl-8-ribityllumazine by condensation of 5-amino-6-(D-ribitylamino)uracil with 3,4-dihydroxy-2-butanone 4-phosphate. This is the penultimate step in the biosynthesis of riboflavin. The protein is 6,7-dimethyl-8-ribityllumazine synthase of Mycolicibacterium gilvum (strain PYR-GCK) (Mycobacterium gilvum (strain PYR-GCK)).